The sequence spans 381 residues: CCN family member 1 (381 aa).

The signal sequence occupies residues 1–24; the sequence is MSSRIARALALVVTLLHLTRLALS. Residues 25–94 enclose the IGFBP N-terminal domain; it reads TCPAACHCPL…TALKGICRAQ (70 aa). Disulfide bonds link Cys26-Cys50, Cys30-Cys52, Cys32-Cys53, Cys39-Cys56, Cys64-Cys78, and Cys70-Cys91. The VWFC domain occupies 98-164; that stretch reads RPCEYNSRIY…GQCCEEWVCD (67 aa). Phosphoserine is present on Ser188. In terms of domain architecture, TSP type-1 spans 228–273; the sequence is KCIVQTTSWSQCSKTCGTGISTRVTNDNPECRLVKETRICEVRPCG. Positions 279–315 are heparin-binding; sequence SLKKGKKCSKTKKSPEPVRFTYAGCLSVKKYRPKYCG. Cystine bridges form between Cys286/Cys323, Cys303/Cys337, Cys314/Cys353, Cys317/Cys355, and Cys322/Cys359. The CTCK domain occupies 286–360; the sequence is CSKTKKSPEP…QSCKCNYNCP (75 aa).

Belongs to the CCN family. Interaction with integrins is heparin- and cell-type-dependent and promotes cell adhesion.

Its subcellular location is the secreted. In terms of biological role, promotes cell proliferation, chemotaxis, angiogenesis and cell adhesion. Appears to play a role in wound healing by up-regulating, in skin fibroblasts, the expression of a number of genes involved in angiogenesis, inflammation and matrix remodeling including VEGA-A, VEGA-C, MMP1, MMP3, TIMP1, uPA, PAI-1 and integrins alpha-3 and alpha-5. CCN1-mediated gene regulation is dependent on heparin-binding. Down-regulates the expression of alpha-1 and alpha-2 subunits of collagen type-1. Promotes cell adhesion and adhesive signaling through integrin alpha-6/beta-1, cell migration through integrin alpha-1/beta-5 and cell proliferation through integrin alpha-v/beta-3. The chain is CCN family member 1 (CCN1) from Pan troglodytes (Chimpanzee).